Consider the following 557-residue polypeptide: Urocanate hydratase (557 aa).

NAD(+) is bound by residues 52 to 53, Gln130, 176 to 178, Glu196, Arg201, 242 to 243, 263 to 267, 273 to 274, and Tyr322; these read GG, GMG, NA, QTSAH, and YL. Cys410 is a catalytic residue. Residue Gly492 coordinates NAD(+).

Belongs to the urocanase family. The cofactor is NAD(+).

It localises to the cytoplasm. It catalyses the reaction 4-imidazolone-5-propanoate = trans-urocanate + H2O. It functions in the pathway amino-acid degradation; L-histidine degradation into L-glutamate; N-formimidoyl-L-glutamate from L-histidine: step 2/3. Catalyzes the conversion of urocanate to 4-imidazolone-5-propionate. This chain is Urocanate hydratase, found in Allorhizobium ampelinum (strain ATCC BAA-846 / DSM 112012 / S4) (Agrobacterium vitis (strain S4)).